The chain runs to 658 residues: Alkyldihydroxyacetonephosphate synthase, peroxisomal (658 aa).

Disordered regions lie at residues 1-41 (MAEA…LRVL) and 63-86 (AASAATAAPTATPAAQESGTIPKK). The transit peptide at 1–58 (MAEAAAAAGGTGLGAGASYGSAADRDRDPDPDRAGRRLRVLSGHLLGRPREALSTNEC) directs the protein to the peroxisome. A compositionally biased stretch (basic and acidic residues) spans 23 to 35 (ADRDRDPDPDRAG). Over residues 63 to 77 (AASAATAAPTATPAA) the composition is skewed to low complexity. Ser-65 bears the Phosphoserine mark. Thr-74 is modified (phosphothreonine). N6-acetyllysine is present on Lys-102. Positions 202 to 384 (FERIPDIVLW…TEATIKIRPV (183 aa)) constitute an FAD-binding PCMH-type domain. FAD is bound by residues 234–240 (PIGGGTS), 303–309 (DSLEFST), and 316–319 (TRAS). Lys-347 carries the post-translational modification N6-acetyllysine. FAD is bound at residue 368–374 (EGTLGVI). Arg-515 lines the substrate pocket. The Proton donor/acceptor role is filled by Tyr-578. 2 important for enzyme activity regions span residues 615–617 (HHH) and 654–658 (NRNLL).

Belongs to the FAD-binding oxidoreductase/transferase type 4 family. Homodimer. Requires FAD as cofactor.

The protein localises to the peroxisome membrane. The protein resides in the peroxisome. It carries out the reaction a long chain fatty alcohol + a 1-acylglycerone 3-phosphate = a 1-O-alkylglycerone 3-phosphate + a long-chain fatty acid + H(+). The catalysed reaction is hexadecan-1-ol + 1-hexadecanoylglycerone 3-phosphate = 1-O-hexadecylglycerone 3-phosphate + hexadecanoate + H(+). The enzyme catalyses 1-hexadecanoylglycerone 3-phosphate + a long-chain fatty acid = a 1-acylglycerone 3-phosphate + hexadecanoate. It participates in glycerolipid metabolism; ether lipid biosynthesis. Functionally, catalyzes the exchange of the acyl chain in acyl-dihydroxyacetonephosphate (acyl-DHAP) for a long chain fatty alcohol, yielding the first ether linked intermediate, i.e. alkyl-dihydroxyacetonephosphate (alkyl-DHAP), in the pathway of ether lipid biosynthesis. The protein is Alkyldihydroxyacetonephosphate synthase, peroxisomal (AGPS) of Homo sapiens (Human).